A 354-amino-acid chain; its full sequence is Guanine nucleotide-binding protein G(i) subunit alpha-1 (354 aa).

G2 carries N-myristoyl glycine lipidation. C3 carries S-palmitoyl cysteine lipidation. The G-alpha domain maps to 32 to 354 (REVKLLLLGA…KNNLKDCGLF (323 aa)). Residues 35–48 (KLLLLGAGESGKST) are G1 motif. Residues 43–48 (ESGKST), 150–151 (DS), and 175–178 (LRTR) each bind GTP. S47 is a binding site for Mg(2+). Positions 173–181 (DVLRTRVKT) are G2 motif. Residue T181 participates in Mg(2+) binding. The interval 196-205 (FKMFDVGGQR) is G3 motif. GTP contacts are provided by residues 200-204 (DVGGQ), 269-272 (NKKD), and A326. The interval 265–272 (ILFLNKKD) is G4 motif. Residues 324–329 (TCATDT) are G5 motif.

Belongs to the G-alpha family. G(i/o/t/z) subfamily. In terms of assembly, heterotrimeric G proteins are composed of 3 units; alpha, beta and gamma. The alpha chain contains the guanine nucleotide binding site. Part of a spindle orientation complex at least composed of GNAI1, GPSM2 and NUMA1. Identified in complex with the beta subunit GNB1 and the gamma subunit GNG1. Identified in complex with the beta subunit GNB1 and the gamma subunit GNG2. Component of the TAS2R14-GNAI1 complex, consisting of TAS2R14, GNAI1, GNB1 and GNG2; within the complex interacts with TAS2R14; this complex plays a role in the perception of bitterness. GTP binding causes dissociation of the heterotrimer, liberating the individual subunits so that they can interact with downstream effector proteins. Interacts (GDP-bound form) with GPSM1; this inhibits guanine nucleotide exchange and GTP binding. Interacts (GDP-bound form) with GPSM2 (via GoLoco domains); this inhibits guanine nucleotide exchange. Interacts with RGS10; this strongly enhances GTP hydrolysis. Interacts with RGS1 and RGS16. Interacts with RGS4. Interacts with RGS12. Interacts (via active GTP- or inactive GDP-bound forms) with RGS14 (via RGS and GoLoco domains). Interacts with RGS3, RGS6, RGS7, RGS8, RGS17, RGS18 and RGS20 (in vitro). Interacts (GDP-bound form) with RIC8A (via C-terminus); promoting GNAI1 folding and association with the plasma membrane. Interacts (inactive GDP-bound form) with NUCB1 (via GBA motif); the interaction leads to activation of GNAI1. Interacts (inactive GDP-bound form) with CCDC88C/DAPLE (via GBA motif); the interaction leads to activation of GNAI1. Interacts (inactive GDP-bound form) with CCDC8A/GIV (via GBA motif). Interacts with GPR15. In terms of processing, myristoylation at Gly-2 is required for membrane anchoring before palmitoylation. Palmitoylation at Cys-3 varies with membrane lipid composition.

It is found in the nucleus. It localises to the cytoplasm. The protein resides in the cell membrane. The protein localises to the cytoskeleton. Its subcellular location is the microtubule organizing center. It is found in the centrosome. It localises to the cell cortex. The protein resides in the membrane. It carries out the reaction GTP + H2O = GDP + phosphate + H(+). In terms of biological role, guanine nucleotide-binding proteins (G proteins) function as transducers downstream of G protein-coupled receptors (GPCRs) in numerous signaling cascades. The alpha chain contains the guanine nucleotide binding site and alternates between an active, GTP-bound state and an inactive, GDP-bound state. Signaling by an activated GPCR promotes GDP release and GTP binding. The alpha subunit has a low GTPase activity that converts bound GTP to GDP, thereby terminating the signal. Both GDP release and GTP hydrolysis are modulated by numerous regulatory proteins. Signaling is mediated via effector proteins, such as adenylate cyclase. Inhibits adenylate cyclase activity of ADCY1, ADCY5 and ADCY6, leading to decreased intracellular cAMP levels. The inactive GDP-bound form prevents the association of RGS14 with centrosomes and is required for the translocation of RGS14 from the cytoplasm to the plasma membrane. Required for normal cytokinesis during mitosis. Required for cortical dynein-dynactin complex recruitment during metaphase. This is Guanine nucleotide-binding protein G(i) subunit alpha-1 (Gnai1) from Rattus norvegicus (Rat).